The sequence spans 316 residues: MAKAARRTKSAPARRSPRRHARQTGATIRRPKRPIKSNETIALPKWLGFLSHPLLKQMAKRLLLILVIVGFLAGLWAARWPQLLATKTGEYLGRQGFSVRHVEIVGLHHMDRQAIYDIASTQQNLAMPLVDLNAIRDRLLRFGWIEDARVSRRWPDTLVVDIVERNPAAVWQYHGHLRLVDNNGIIISDVDPHASPDLPLVIGAGANLHLEDLGHLLEAAPSLKPMIDAASWIGNRRWDLHFASGETLSLPEGNEAEAALVRFSHINREHHLLERGYVKFDMRVPGAPITARISPEPVKKATKPAKAADPLVSDRI.

The segment at 1–34 is disordered; the sequence is MAKAARRTKSAPARRSPRRHARQTGATIRRPKRP. The Cytoplasmic portion of the chain corresponds to 1–61; sequence MAKAARRTKS…HPLLKQMAKR (61 aa). A helical transmembrane segment spans residues 62 to 80; it reads LLLILVIVGFLAGLWAARW. Over 81 to 316 the chain is Periplasmic; sequence PQLLATKTGE…AADPLVSDRI (236 aa). Residues 97 to 165 form the POTRA domain; that stretch reads FSVRHVEIVG…DTLVVDIVER (69 aa). The interval 295-316 is disordered; that stretch reads PEPVKKATKPAKAADPLVSDRI.

It belongs to the FtsQ/DivIB family. FtsQ subfamily.

It localises to the cell inner membrane. In terms of biological role, essential cell division protein. The sequence is that of Cell division protein FtsQ from Zymomonas mobilis subsp. mobilis (strain ATCC 31821 / ZM4 / CP4).